The primary structure comprises 173 residues: Disulfide bond formation protein B (173 aa).

At 1-14 the chain is on the cytoplasmic side; that stretch reads MIEFLRRIAAHRLA. Residues 15–31 form a helical membrane-spanning segment; that stretch reads WGLLAASALFLELSALF. Residues 32–49 are Periplasmic-facing; that stretch reads FQYVLGLHPCVMCVYERL. Cys41 and Cys44 are joined by a disulfide. A helical transmembrane segment spans residues 50 to 65; it reads AILGVLSAGLLGMVAP. Residues 66–72 are Cytoplasmic-facing; that stretch reads EKWYLRW. Residues 73–90 traverse the membrane as a helical segment; that stretch reads SALLLWGYSAFRGLQLAL. Residues 91–145 are Periplasmic-facing; sequence KHVDYQMNPSPFNVCSPFADFPSWAPLDQWLPWLFFPDGDCSEISWQFLSFSMPQ. A disulfide bridge links Cys105 with Cys131. Residues 146–164 traverse the membrane as a helical segment; that stretch reads WLVAIFAAYLLVFVVVTIG. Residues 165-173 are Cytoplasmic-facing; that stretch reads NLVKGRCCS.

The protein belongs to the DsbB family.

It localises to the cell inner membrane. Its function is as follows. Required for disulfide bond formation in some periplasmic proteins. Acts by oxidizing the DsbA protein. In Aeromonas salmonicida (strain A449), this protein is Disulfide bond formation protein B.